A 513-amino-acid chain; its full sequence is Alpha-1B-glycoprotein (513 aa).

An N-terminal signal peptide occupies residues 1–20; it reads MSLLTTVLLLWGFTLGPGNA. Ig-like V-type domains follow at residues 22–126, 127–219, 220–312, 313–415, and 416–513; these read WLDS…VTGK, EPLP…MSAT, QLPP…PVEL, MWSD…LRIN, and GPAP…VEGS. Residues Asn-44, Asn-89, and Asn-192 are each glycosylated (N-linked (GlcNAc...) asparagine). Intrachain disulfides connect Cys-49–Cys-96, Cys-153–Cys-195, Cys-245–Cys-292, Cys-343–Cys-392, and Cys-441–Cys-488. Residues Asn-369, Asn-381, Asn-389, and Asn-485 are each glycosylated (N-linked (GlcNAc...) asparagine).

Interacts with CRISP3. Isoform 1 is expressed in normal liver. Isoform 2 is expressed in the regenerating liver after partial hepatectomy and at very low levels in the normal lung, brain and testis.

It localises to the secreted. This chain is Alpha-1B-glycoprotein, found in Rattus norvegicus (Rat).